The primary structure comprises 603 residues: Terpenoid synthase 25 (603 aa).

Residues Asp-356, Asp-360, Asn-500, Thr-504, and Glu-508 each coordinate Mg(2+). Positions 356 to 360 match the DDXXD motif motif; the sequence is DDTCD.

The protein belongs to the terpene synthase family. Tpsa subfamily. Mg(2+) is required as a cofactor. It depends on Mn(2+) as a cofactor. Predominantly expressed in roots but also in flowers.

Its subcellular location is the cytoplasm. It participates in secondary metabolite biosynthesis; terpenoid biosynthesis. Its function is as follows. Involved in terpene biosynthesis in roots. Possesses sesquiterpene (C15) synthase activity in vitro. Does not seem to be involved in diterpene (C20) biosynthesis. This Arabidopsis thaliana (Mouse-ear cress) protein is Terpenoid synthase 25.